The sequence spans 305 residues: Homoserine O-acetyltransferase (305 aa).

C142 functions as the Acyl-thioester intermediate in the catalytic mechanism. Substrate is bound by residues K163 and S192. H235 serves as the catalytic Proton acceptor. E237 is an active-site residue. R249 provides a ligand contact to substrate.

This sequence belongs to the MetA family.

Its subcellular location is the cytoplasm. The enzyme catalyses L-homoserine + acetyl-CoA = O-acetyl-L-homoserine + CoA. It functions in the pathway amino-acid biosynthesis; L-methionine biosynthesis via de novo pathway; O-acetyl-L-homoserine from L-homoserine: step 1/1. In terms of biological role, transfers an acetyl group from acetyl-CoA to L-homoserine, forming acetyl-L-homoserine. In Hyphomonas neptunium (strain ATCC 15444), this protein is Homoserine O-acetyltransferase.